The primary structure comprises 136 residues: uncharacterized protein (136 aa).

Its subcellular location is the mitochondrion. This is an uncharacterized protein from Marchantia polymorpha (Common liverwort).